The primary structure comprises 66 residues: Probable cytochrome b-c1 complex subunit 9 (66 aa).

Residues 1 to 20 are Mitochondrial matrix-facing; it reads MSNALTNIFYKYVARRNSTW. The chain crosses the membrane as a helical span at residues 21–46; that stretch reads MAGAILGAFVLDSTVSGAVNTFFDSV. The Mitochondrial intermembrane portion of the chain corresponds to 47 to 66; it reads NKGKLWKDVYAERVKKGISQ.

This sequence belongs to the UQCR10/QCR9 family. Component of the ubiquinol-cytochrome c oxidoreductase (cytochrome b-c1 complex, complex III, CIII), a multisubunit enzyme composed of 3 respiratory subunits cytochrome b, cytochrome c1 and Rieske protein, 2 core protein subunits, and additional low-molecular weight protein subunits. The complex exists as an obligatory dimer and forms supercomplexes (SCs) in the inner mitochondrial membrane with cytochrome c oxidase (complex IV, CIV).

The protein localises to the mitochondrion inner membrane. Functionally, component of the ubiquinol-cytochrome c oxidoreductase, a multisubunit transmembrane complex that is part of the mitochondrial electron transport chain which drives oxidative phosphorylation. The respiratory chain contains 3 multisubunit complexes succinate dehydrogenase (complex II, CII), ubiquinol-cytochrome c oxidoreductase (cytochrome b-c1 complex, complex III, CIII) and cytochrome c oxidase (complex IV, CIV), that cooperate to transfer electrons derived from NADH and succinate to molecular oxygen, creating an electrochemical gradient over the inner membrane that drives transmembrane transport and the ATP synthase. The cytochrome b-c1 complex catalyzes electron transfer from ubiquinol to cytochrome c, linking this redox reaction to translocation of protons across the mitochondrial inner membrane, with protons being carried across the membrane as hydrogens on the quinol. In the process called Q cycle, 2 protons are consumed from the matrix, 4 protons are released into the intermembrane space and 2 electrons are passed to cytochrome c. In Dictyostelium discoideum (Social amoeba), this protein is Probable cytochrome b-c1 complex subunit 9.